The primary structure comprises 364 residues: Carbamoyl phosphate synthase small chain (364 aa).

CPSase stretches follow at residues 1-167 (MKRQ…PSPG) and 1-171 (MKRQ…RGER). Serine 45, glycine 219, and glycine 221 together coordinate L-glutamine. Positions 171–358 (RIVLIDFGMK…LALIREFNKK (188 aa)) constitute a Glutamine amidotransferase type-1 domain. The Nucleophile role is filled by cysteine 246. Positions 247, 250, 288, 290, and 291 each coordinate L-glutamine. Residues histidine 331 and glutamate 333 contribute to the active site.

Belongs to the CarA family. Composed of two chains; the small (or glutamine) chain promotes the hydrolysis of glutamine to ammonia, which is used by the large (or ammonia) chain to synthesize carbamoyl phosphate. Tetramer of heterodimers (alpha,beta)4.

It carries out the reaction hydrogencarbonate + L-glutamine + 2 ATP + H2O = carbamoyl phosphate + L-glutamate + 2 ADP + phosphate + 2 H(+). The enzyme catalyses L-glutamine + H2O = L-glutamate + NH4(+). It functions in the pathway amino-acid biosynthesis; L-arginine biosynthesis; carbamoyl phosphate from bicarbonate: step 1/1. It participates in pyrimidine metabolism; UMP biosynthesis via de novo pathway; (S)-dihydroorotate from bicarbonate: step 1/3. Functionally, small subunit of the glutamine-dependent carbamoyl phosphate synthetase (CPSase). CPSase catalyzes the formation of carbamoyl phosphate from the ammonia moiety of glutamine, carbonate, and phosphate donated by ATP, constituting the first step of 2 biosynthetic pathways, one leading to arginine and/or urea and the other to pyrimidine nucleotides. The small subunit (glutamine amidotransferase) binds and cleaves glutamine to supply the large subunit with the substrate ammonia. The sequence is that of Carbamoyl phosphate synthase small chain from Bacillus caldolyticus.